The sequence spans 458 residues: Transmembrane protein 135 (458 aa).

6 consecutive transmembrane segments (helical) span residues 68–88 (ILQS…FFCI), 96–116 (FYSW…AILI), 149–169 (TLRN…MFFF), 298–318 (FQLG…SCFL), 331–351 (IVAG…TISM), and 377–397 (ADTI…VMEV).

The protein belongs to the TMEM135 family.

It localises to the mitochondrion membrane. It is found in the peroxisome membrane. Its function is as follows. Involved in mitochondrial metabolism by regulating the balance between mitochondrial fusion and fission. May act as a regulator of mitochondrial fission that promotes DNM1L-dependent fission through activation of DNM1L. May be involved in peroxisome organization. The sequence is that of Transmembrane protein 135 from Mus musculus (Mouse).